The primary structure comprises 435 residues: Hydrogenobyrinate a,c-diamide synthase (435 aa).

The region spanning 247–435 (RIALARDAAF…TGSFFHLIAG (189 aa)) is the GATase cobBQ-type domain. Residue cysteine 329 is the Nucleophile of the active site.

Belongs to the CobB/CbiA family. It depends on Mg(2+) as a cofactor.

The enzyme catalyses hydrogenobyrinate + 2 L-glutamine + 2 ATP + 2 H2O = hydrogenobyrinate a,c-diamide + 2 L-glutamate + 2 ADP + 2 phosphate + 2 H(+). Its pathway is cofactor biosynthesis; adenosylcobalamin biosynthesis; cob(II)yrinate a,c-diamide from precorrin-2 (aerobic route): step 9/10. Its function is as follows. Catalyzes the ATP-dependent amidation of the two carboxylate groups at positions a and c of hydrogenobyrinate, using either L-glutamine or ammonia as the nitrogen source. The sequence is that of Hydrogenobyrinate a,c-diamide synthase from Rhodobacter capsulatus (strain ATCC BAA-309 / NBRC 16581 / SB1003).